Reading from the N-terminus, the 193-residue chain is Probable molybdenum cofactor guanylyltransferase (193 aa).

GTP is bound by residues 9 to 11, Lys21, Asp64, and Asp93; that span reads TAG. Asp93 is a Mg(2+) binding site.

Belongs to the MobA family. Mg(2+) is required as a cofactor.

Its subcellular location is the cytoplasm. The catalysed reaction is Mo-molybdopterin + GTP + H(+) = Mo-molybdopterin guanine dinucleotide + diphosphate. Functionally, transfers a GMP moiety from GTP to Mo-molybdopterin (Mo-MPT) cofactor (Moco or molybdenum cofactor) to form Mo-molybdopterin guanine dinucleotide (Mo-MGD) cofactor. This Deinococcus radiodurans (strain ATCC 13939 / DSM 20539 / JCM 16871 / CCUG 27074 / LMG 4051 / NBRC 15346 / NCIMB 9279 / VKM B-1422 / R1) protein is Probable molybdenum cofactor guanylyltransferase.